The chain runs to 1378 residues: F-box protein At3g54460 (1378 aa).

Residues 65 to 96 show a composition bias toward basic and acidic residues; sequence GDHDVENSGTIEDGRLETPQKRRKCVEGESSG. The interval 65–113 is disordered; sequence GDHDVENSGTIEDGRLETPQKRRKCVEGESSGKRKTPKSKRRVLSGSKE. Basic residues predominate over residues 97–107; it reads KRKTPKSKRRV. One can recognise an F-box domain in the interval 282 to 328; the sequence is VSGVWDLSDDVLISILMKLDTKDLFSIAAVCRLFRSLTSLIVPCMNL. The CW-type zinc finger occupies 571–622; sequence DVESDIWMQCDSCSKWRRIIDEGVSVTGSAWFCSNNNDPAYQSCNDPEELWD. Positions 580, 583, 603, and 614 each coordinate Zn(2+). The region spanning 720 to 885 is the Helicase ATP-binding domain; the sequence is KWFYPKFLEN…LSHIQPLLKF (166 aa). 733–740 contributes to the ATP binding site; that stretch reads DVPALKVA. A DEAH box motif is present at residues 834 to 837; the sequence is DEGH. The Helicase C-terminal domain maps to 1185–1324; it reads DCGSQMVFVD…DAEKSDRLLS (140 aa).

It belongs to the helicase family.

In Arabidopsis thaliana (Mouse-ear cress), this protein is F-box protein At3g54460.